The primary structure comprises 671 residues: DNA ligase (671 aa).

NAD(+) contacts are provided by residues 31–35, 80–81, and glutamate 110; these read DAEYD and SL. Lysine 112 acts as the N6-AMP-lysine intermediate in catalysis. Residues arginine 133, glutamate 167, lysine 283, and lysine 307 each coordinate NAD(+). The Zn(2+) site is built by cysteine 401, cysteine 404, cysteine 419, and cysteine 424. Residues 587-671 enclose the BRCT domain; it reads EEELVFAGKT…YLPDEGGLNE (85 aa).

This sequence belongs to the NAD-dependent DNA ligase family. LigA subfamily. Mg(2+) is required as a cofactor. Mn(2+) serves as cofactor.

It catalyses the reaction NAD(+) + (deoxyribonucleotide)n-3'-hydroxyl + 5'-phospho-(deoxyribonucleotide)m = (deoxyribonucleotide)n+m + AMP + beta-nicotinamide D-nucleotide.. DNA ligase that catalyzes the formation of phosphodiester linkages between 5'-phosphoryl and 3'-hydroxyl groups in double-stranded DNA using NAD as a coenzyme and as the energy source for the reaction. It is essential for DNA replication and repair of damaged DNA. In Listeria innocua serovar 6a (strain ATCC BAA-680 / CLIP 11262), this protein is DNA ligase.